The primary structure comprises 358 residues: Glycerophosphodiester phosphodiesterase, periplasmic (358 aa).

Positions 1–25 are cleaved as a signal peptide; sequence MKLTLKNLSMAIMMSTIVMGSSAMA. In terms of domain architecture, GP-PDE spans 31–355; that stretch reads KIVIAHRGAS…DFPDKAVKFL (325 aa). The active-site Proton acceptor is the His36. Ca(2+)-binding residues include Glu63 and Asp65. His78 (proton donor) is an active-site residue. Glu171 serves as a coordination point for Ca(2+).

The protein belongs to the glycerophosphoryl diester phosphodiesterase family. Homodimer. It depends on Ca(2+) as a cofactor.

It is found in the periplasm. It carries out the reaction a sn-glycero-3-phosphodiester + H2O = an alcohol + sn-glycerol 3-phosphate + H(+). Its function is as follows. Glycerophosphodiester phosphodiesterase hydrolyzes glycerophosphodiesters into glycerol-3-phosphate (G3P) and the corresponding alcohol. The sequence is that of Glycerophosphodiester phosphodiesterase, periplasmic (glpQ) from Escherichia coli (strain K12).